Here is a 721-residue protein sequence, read N- to C-terminus: Oviduct-specific glycoprotein (721 aa).

The first 21 residues, 1–21 (MGRLLLLAGLVLLMKHSDGTA), serve as a signal peptide directing secretion. In terms of domain architecture, GH18 spans 22 to 385 (YKLVCYFTNW…HILNELLVQT (364 aa)). Cys-26 and Cys-51 are joined by a disulfide. Residues 71-72 (LQ), 98-101 (GGWN), Tyr-142, 211-214 (LSYD), and Trp-355 contribute to the chitin site. Residues Asn-402 and Asn-442 are each glycosylated (N-linked (GlcNAc...) asparagine). Residues 444 to 456 (TTVPSDGSVTPGG) show a composition bias toward polar residues. Residues 444-465 (TTVPSDGSVTPGGTASPRKHAV) form a disordered region. The N-linked (GlcNAc...) asparagine glycan is linked to Asn-469. 21 consecutive repeat copies span residues 486 to 492 (SKTTTGV), 493 to 499 (SKTTTGI), 500 to 506 (SKTTTGV), 507 to 513 (SKTTTGV), 514 to 520 (SKATAGI), 521 to 527 (SKTIPEI), 528 to 534 (SKATAGV), 535 to 541 (SKTTTGV), 542 to 548 (SKTTTGI), 549 to 555 (SKTITGV), 556 to 562 (SKTTTGI), 563 to 569 (SKTTTGI), 570 to 576 (SKTTTGV), 577 to 583 (SKITTGV), 584 to 590 (SKTTTGI), 591 to 597 (SKTTTGI), 598 to 604 (SQTTTGI), 605 to 611 (SKTTTDI), 612 to 618 (SKTTTGI), 619 to 625 (SKTTPGI), and 626 to 632 (SKTTPGM). Residues 486–632 (SKTTTGVSKT…PGISKTTPGM (147 aa)) form a 21 X 7 AA tandem repeats of S-K-[TAI]-[TI]-[TAP]-[GED]-[IVM] region.

The protein belongs to the glycosyl hydrolase 18 family. Epithelial cells of the oviduct.

The protein localises to the cytoplasmic vesicle. It localises to the secretory vesicle. In terms of biological role, binds to oocyte zona pellucida in vivo. May play a role in the fertilization process and/or early embryonic development. The chain is Oviduct-specific glycoprotein (Ovgp1) from Mus musculus (Mouse).